A 90-amino-acid polypeptide reads, in one-letter code: Accessory gland-specific peptide 26Ab (90 aa).

The first 21 residues, 1–21 (MNYFAVLCIFSCICLWQFSDA), serve as a signal peptide directing secretion.

Main cells of the accessory glands of males.

The protein resides in the secreted. It is found in the extracellular space. Its function is as follows. This protein is transferred from male to female during mating and may affect egglaying and behavior after mating. This Drosophila sechellia (Fruit fly) protein is Accessory gland-specific peptide 26Ab (Acp26Ab).